The sequence spans 99 residues: uncharacterized protein (99 aa).

Residues 1–19 form the signal peptide; sequence MLGMIRWVVEGTLVAMLLS. The segment at 71–99 is disordered; sequence DGFGRINDSGPKRRGRDQSQYSSRFVELD.

Its subcellular location is the cytoplasm. This is an uncharacterized protein from Saccharomyces cerevisiae (strain ATCC 204508 / S288c) (Baker's yeast).